The sequence spans 401 residues: Chorismate synthase (401 aa).

NADP(+)-binding residues include arginine 40 and arginine 46. FMN contacts are provided by residues 135–137, 256–257, glycine 300, 315–319, and arginine 341; these read RAS, QA, and KPIST.

Belongs to the chorismate synthase family. In terms of assembly, homotetramer. FMNH2 serves as cofactor.

The catalysed reaction is 5-O-(1-carboxyvinyl)-3-phosphoshikimate = chorismate + phosphate. Its pathway is metabolic intermediate biosynthesis; chorismate biosynthesis; chorismate from D-erythrose 4-phosphate and phosphoenolpyruvate: step 7/7. Catalyzes the anti-1,4-elimination of the C-3 phosphate and the C-6 proR hydrogen from 5-enolpyruvylshikimate-3-phosphate (EPSP) to yield chorismate, which is the branch point compound that serves as the starting substrate for the three terminal pathways of aromatic amino acid biosynthesis. This reaction introduces a second double bond into the aromatic ring system. This chain is Chorismate synthase, found in Mycobacterium avium (strain 104).